Consider the following 174-residue polypeptide: Solute carrier family 2, facilitated glucose transporter member 4 (174 aa).

The Cytoplasmic portion of the chain corresponds to 1-19; the sequence is QQIGSEDGEPPQQRVTGTL. Residues 2-8 form an interaction with SRFBP1 region; that stretch reads QIGSEDG. At Ser5 the chain carries Phosphoserine. Residues 20-40 form a helical membrane-spanning segment; it reads VLAVFSAVLGSLQFGYNIGVI. Topologically, residues 41 to 76 are extracellular; the sequence is NAPQKVIEQSYNETWLGRQGPNGPGSIPPGTLTTLW. A glycan (N-linked (GlcNAc...) asparagine) is linked at Asn52. Residues 77 to 97 traverse the membrane as a helical segment; it reads ALSVAIFSVGGMFSSFLLGII. Residues 98 to 114 lie on the Cytoplasmic side of the membrane; it reads SQWLGRKKAMLFNNTLA. The helical transmembrane segment at 115–135 threads the bilayer; that stretch reads VLAGALMGLAKAAASYEMLIL. Over 136 to 137 the chain is Extracellular; it reads GR. The helical transmembrane segment at 138-158 threads the bilayer; sequence FLIGAYSGLASGLVPMYVGEI. The Cytoplasmic portion of the chain corresponds to 159 to 166; the sequence is APTHLRGA. Residues 167 to 174 form a helical membrane-spanning segment; the sequence is LGTLNQLA.

This sequence belongs to the major facilitator superfamily. Sugar transporter (TC 2.A.1.1) family. Glucose transporter subfamily. As to quaternary structure, binds to DAXX. Interacts via its N-terminus with SRFBP1. Interacts with NDUFA9. Interacts with TRARG1; the interaction is required for proper SLC2A4 recycling after insulin stimulation. Sumoylated. In terms of processing, palmitoylated. Palmitoylation by ZDHHC7 controls the insulin-dependent translocation of GLUT4 to the plasma membrane.

Its subcellular location is the cell membrane. It is found in the endomembrane system. The protein resides in the cytoplasm. It localises to the perinuclear region. The enzyme catalyses D-glucose(out) = D-glucose(in). In terms of biological role, insulin-regulated facilitative glucose transporter, which plays a key role in removal of glucose from circulation. Response to insulin is regulated by its intracellular localization: in the absence of insulin, it is efficiently retained intracellularly within storage compartments in muscle and fat cells. Upon insulin stimulation, translocates from these compartments to the cell surface where it transports glucose from the extracellular milieu into the cell. The sequence is that of Solute carrier family 2, facilitated glucose transporter member 4 from Sus scrofa (Pig).